The following is a 334-amino-acid chain: Glutaredoxin-3 (334 aa).

Ala2 is subject to N-acetylalanine. The Thioredoxin domain maps to 2–116; it reads AGGAAEAAAA…LTKKVQRHAS (115 aa). The interval 110 to 131 is disordered; the sequence is KVQRHASSGSFSPSGSEHPKED. Residues Ser116 and Ser119 each carry the phosphoserine modification. A compositionally biased stretch (low complexity) spans 116–125; that stretch reads SSGSFSPSGS. Glutaredoxin domains are found at residues 145–235 and 236–334; these read CMLF…PKLE and ERLK…KGEN. The [2Fe-2S] cluster site is built by Cys158 and Cys260.

In terms of assembly, homodimer; the homodimer is independent of 2Fe-2S clusters. Heterotrimer; forms a heterotrimeric complex composed by two BOLA2 molecules and one GLRX3 molecule; linked by [2Fe-2S] clusters. Interacts (via N-terminus) with PRKCQ/PKC-theta. Interacts (via C-terminus) with CSRP3. Interacts with CSRP2.

It localises to the cytoplasm. The protein resides in the cytosol. The protein localises to the cell cortex. Its subcellular location is the myofibril. It is found in the sarcomere. It localises to the z line. Its function is as follows. Together with BOLA2, acts as a cytosolic iron-sulfur (Fe-S) cluster assembly factor that facilitates [2Fe-2S] cluster insertion into a subset of cytosolic proteins. Acts as a critical negative regulator of cardiac hypertrophy and a positive inotropic regulator. Required for hemoglobin maturation. Does not possess any thyoredoxin activity since it lacks the conserved motif that is essential for catalytic activity. The protein is Glutaredoxin-3 (GLRX3) of Bos taurus (Bovine).